The chain runs to 65 residues: uncharacterized protein (65 aa).

Positions 24 to 65 are disordered; sequence NNNNNNNNNNNNNNNNNNNNNNNNNNNNNNNKNNKNNNKNND.

This is an uncharacterized protein from Dictyostelium discoideum (Social amoeba).